The primary structure comprises 109 residues: uncharacterized protein (109 aa).

Helical transmembrane passes span 16 to 36 (HPHL…EIYF), 52 to 72 (LIVL…LIAL), and 87 to 107 (ILLC…AYPV).

It localises to the cell membrane. This is an uncharacterized protein from Salmonella typhimurium (strain LT2 / SGSC1412 / ATCC 700720).